A 364-amino-acid chain; its full sequence is Aminomethyltransferase (364 aa).

Belongs to the GcvT family. The glycine cleavage system is composed of four proteins: P, T, L and H.

It carries out the reaction N(6)-[(R)-S(8)-aminomethyldihydrolipoyl]-L-lysyl-[protein] + (6S)-5,6,7,8-tetrahydrofolate = N(6)-[(R)-dihydrolipoyl]-L-lysyl-[protein] + (6R)-5,10-methylene-5,6,7,8-tetrahydrofolate + NH4(+). Functionally, the glycine cleavage system catalyzes the degradation of glycine. This chain is Aminomethyltransferase, found in Shigella flexneri serotype 5b (strain 8401).